Consider the following 101-residue polypeptide: Small ribosomal subunit protein uS14 (101 aa).

Belongs to the universal ribosomal protein uS14 family. In terms of assembly, part of the 30S ribosomal subunit. Contacts proteins S3 and S10.

Functionally, binds 16S rRNA, required for the assembly of 30S particles and may also be responsible for determining the conformation of the 16S rRNA at the A site. The polypeptide is Small ribosomal subunit protein uS14 (Chlamydia abortus (strain DSM 27085 / S26/3) (Chlamydophila abortus)).